The sequence spans 239 residues: Protein TrbH (239 aa).

Residues 208–228 traverse the membrane as a helical segment; the sequence is TVVSIICLLMWICLVYIHCGI.

The protein localises to the cell inner membrane. In Escherichia coli (strain K12), this protein is Protein TrbH (trbH).